A 156-amino-acid chain; its full sequence is Small ribosomal subunit protein uS7 (156 aa).

Belongs to the universal ribosomal protein uS7 family. In terms of assembly, part of the 30S ribosomal subunit. Contacts proteins S9 and S11.

In terms of biological role, one of the primary rRNA binding proteins, it binds directly to 16S rRNA where it nucleates assembly of the head domain of the 30S subunit. Is located at the subunit interface close to the decoding center, probably blocks exit of the E-site tRNA. The protein is Small ribosomal subunit protein uS7 of Pseudarthrobacter chlorophenolicus (strain ATCC 700700 / DSM 12829 / CIP 107037 / JCM 12360 / KCTC 9906 / NCIMB 13794 / A6) (Arthrobacter chlorophenolicus).